A 474-amino-acid polypeptide reads, in one-letter code: UDP-N-acetylmuramate--L-alanine ligase (474 aa).

An ATP-binding site is contributed by glycine 123–threonine 129.

It belongs to the MurCDEF family.

The protein localises to the cytoplasm. It catalyses the reaction UDP-N-acetyl-alpha-D-muramate + L-alanine + ATP = UDP-N-acetyl-alpha-D-muramoyl-L-alanine + ADP + phosphate + H(+). It participates in cell wall biogenesis; peptidoglycan biosynthesis. Functionally, cell wall formation. The protein is UDP-N-acetylmuramate--L-alanine ligase of Alcanivorax borkumensis (strain ATCC 700651 / DSM 11573 / NCIMB 13689 / SK2).